We begin with the raw amino-acid sequence, 138 residues long: Transcription antitermination protein NusB (138 aa).

Belongs to the NusB family.

In terms of biological role, involved in transcription antitermination. Required for transcription of ribosomal RNA (rRNA) genes. Binds specifically to the boxA antiterminator sequence of the ribosomal RNA (rrn) operons. The sequence is that of Transcription antitermination protein NusB from Desulforudis audaxviator (strain MP104C).